The primary structure comprises 134 residues: Small ribosomal subunit protein uS11 (134 aa).

Disordered regions lie at residues 1 to 22 (MPPK…KNVA) and 114 to 134 (SIQD…RRRV). Residues 9–22 (AAKKVRRKEKKNVA) show a composition bias toward basic residues.

The protein belongs to the universal ribosomal protein uS11 family. In terms of assembly, part of the 30S ribosomal subunit. Interacts with proteins S7 and S18. Binds to IF-3.

Functionally, located on the platform of the 30S subunit, it bridges several disparate RNA helices of the 16S rRNA. Forms part of the Shine-Dalgarno cleft in the 70S ribosome. This chain is Small ribosomal subunit protein uS11, found in Streptomyces coelicolor (strain ATCC BAA-471 / A3(2) / M145).